Reading from the N-terminus, the 400-residue chain is Tektin-B1 (400 aa).

Coiled coils occupy residues 35-81 (TRLS…AKAL), 236-294 (FALR…LENR), and 310-353 (GLVN…LELK).

The protein belongs to the tektin family. May form a heterodimer with tektin a or exist as a homodimer. As to expression, cilia and flagella.

It is found in the cytoplasm. The protein localises to the cytoskeleton. Its function is as follows. Structural component of ciliary and flagellar microtubules. The chain is Tektin-B1 from Strongylocentrotus purpuratus (Purple sea urchin).